A 543-amino-acid chain; its full sequence is Cytochrome P450 1B1 (543 aa).

Cys-470 is a binding site for heme.

It belongs to the cytochrome P450 family. It depends on heme as a cofactor. Constitutively expressed in retinal and kidney pericytes cells. Expressed in retinal endothelial cells (at protein level). Expressed in cardiac, pulmonary and aortic endothelial cells. Constitutively expressed in trabecular meshwork of the eye (at protein level).

The protein localises to the endoplasmic reticulum membrane. The protein resides in the microsome membrane. Its subcellular location is the mitochondrion. The enzyme catalyses an organic molecule + reduced [NADPH--hemoprotein reductase] + O2 = an alcohol + oxidized [NADPH--hemoprotein reductase] + H2O + H(+). It catalyses the reaction 17beta-estradiol + reduced [NADPH--hemoprotein reductase] + O2 = 2-hydroxy-17beta-estradiol + oxidized [NADPH--hemoprotein reductase] + H2O + H(+). The catalysed reaction is 17beta-estradiol + reduced [NADPH--hemoprotein reductase] + O2 = 4-hydroxy-17beta-estradiol + oxidized [NADPH--hemoprotein reductase] + H2O + H(+). It carries out the reaction estrone + reduced [NADPH--hemoprotein reductase] + O2 = 2-hydroxyestrone + oxidized [NADPH--hemoprotein reductase] + H2O + H(+). The enzyme catalyses estrone + reduced [NADPH--hemoprotein reductase] + O2 = 4-hydroxyestrone + oxidized [NADPH--hemoprotein reductase] + H2O + H(+). It catalyses the reaction testosterone + reduced [NADPH--hemoprotein reductase] + O2 = 6beta,17beta-dihydroxyandrost-4-en-3-one + oxidized [NADPH--hemoprotein reductase] + H2O + H(+). The catalysed reaction is progesterone + reduced [NADPH--hemoprotein reductase] + O2 = 6beta-hydroxyprogesterone + oxidized [NADPH--hemoprotein reductase] + H2O + H(+). It carries out the reaction progesterone + reduced [NADPH--hemoprotein reductase] + O2 = 16alpha-hydroxyprogesterone + oxidized [NADPH--hemoprotein reductase] + H2O + H(+). The enzyme catalyses all-trans-retinol + reduced [NADPH--hemoprotein reductase] + O2 = all-trans-retinal + oxidized [NADPH--hemoprotein reductase] + 2 H2O + H(+). It catalyses the reaction all-trans-retinal + reduced [NADPH--hemoprotein reductase] + O2 = all-trans-retinoate + oxidized [NADPH--hemoprotein reductase] + H2O + 2 H(+). The catalysed reaction is (5Z,8Z,11Z,14Z)-eicosatetraenoate + reduced [NADPH--hemoprotein reductase] + O2 = (8R,9S)-epoxy-(5Z,11Z,14Z)-eicosatrienoate + oxidized [NADPH--hemoprotein reductase] + H2O + H(+). It carries out the reaction (5Z,8Z,11Z,14Z)-eicosatetraenoate + reduced [NADPH--hemoprotein reductase] + O2 = (11R,12S)-epoxy-(5Z,8Z,14Z)-eicosatrienoate + oxidized [NADPH--hemoprotein reductase] + H2O + H(+). The enzyme catalyses (5Z,8Z,11Z,14Z)-eicosatetraenoate + reduced [NADPH--hemoprotein reductase] + O2 = (11S,12R)-epoxy-(5Z,8Z,14Z)-eicosatrienoate + oxidized [NADPH--hemoprotein reductase] + H2O + H(+). It catalyses the reaction (5Z,8Z,11Z,14Z)-eicosatetraenoate + reduced [NADPH--hemoprotein reductase] + O2 = (14R,15S)-epoxy-(5Z,8Z,11Z)-eicosatrienoate + oxidized [NADPH--hemoprotein reductase] + H2O + H(+). The catalysed reaction is (5S)-hydroperoxy-(6E,8Z,11Z,14Z)-eicosatetraenoate = 5-oxo-(6E,8Z,11Z,14Z)-eicosatetraenoate + H2O. It carries out the reaction (12S)-hydroperoxy-(5Z,8Z,10E,14Z)-eicosatetraenoate = 12-oxo-(5Z,8Z,10E,14Z)-eicosatetraenoate + H2O. The enzyme catalyses (13S)-hydroperoxy-(9Z,11E)-octadecadienoate = 13-oxo-(9Z,11E)-octadecadienoate + H2O. It catalyses the reaction (15S)-hydroperoxy-(5Z,8Z,11Z,13E)-eicosatetraenoate = 15-oxo-(5Z,8Z,11Z,13E)-eicosatetraenoate + H2O. Its pathway is steroid hormone biosynthesis. The protein operates within cofactor metabolism; retinol metabolism. It participates in lipid metabolism; arachidonate metabolism. Enzyme activity is increased by cytochrome b5. Enzyme activity is increased by liposomes containing anionic phospholipids, phosphatidic acid and cardiolipin. Inhibited by naringenin with an IC(50) of 5 uM. Functionally, a cytochrome P450 monooxygenase involved in the metabolism of various endogenous substrates, including fatty acids, steroid hormones and vitamins. Mechanistically, uses molecular oxygen inserting one oxygen atom into a substrate, and reducing the second into a water molecule, with two electrons provided by NADPH via cytochrome P450 reductase (NADPH--hemoprotein reductase). Exhibits catalytic activity for the formation of hydroxyestrogens from 17beta-estradiol (E2), namely 2- and 4-hydroxy E2. Metabolizes testosterone and progesterone to B or D ring hydroxylated metabolites. May act as a major enzyme for all-trans retinoic acid biosynthesis in extrahepatic tissues. Catalyzes two successive oxidative transformation of all-trans retinol to all-trans retinal and then to the active form all-trans retinoic acid. Catalyzes the epoxidation of double bonds of certain PUFA. Converts arachidonic acid toward epoxyeicosatrienoic acid (EpETrE) regioisomers, 8,9-, 11,12-, and 14,15- EpETrE, that function as lipid mediators in the vascular system. Additionally, displays dehydratase activity toward oxygenated eicosanoids hydroperoxyeicosatetraenoates (HpETEs). This activity is independent of cytochrome P450 reductase, NADPH, and O2. Also involved in the oxidative metabolism of xenobiotics, particularly converting polycyclic aromatic hydrocarbons and heterocyclic aryl amines procarcinogens to DNA-damaging products. Plays an important role in retinal vascular development. Under ambient/hyperoxic O2 conditions, promotes angiogenesis and capillary morphogenesis of retinal endothelial cells and pericytes, likely by metabolizing the oxygenated products symptomatic of oxidative stress. Also, contributes to oxidative homeostasis and ultrastructural organization and function of trabecular meshwork tissue through modulation of POSTN expression. This is Cytochrome P450 1B1 from Mus musculus (Mouse).